A 238-amino-acid chain; its full sequence is 1-(5-phosphoribosyl)-5-[(5-phosphoribosylamino)methylideneamino] imidazole-4-carboxamide isomerase (238 aa).

The active-site Proton acceptor is the D8. D129 functions as the Proton donor in the catalytic mechanism.

Belongs to the HisA/HisF family.

It is found in the cytoplasm. The enzyme catalyses 1-(5-phospho-beta-D-ribosyl)-5-[(5-phospho-beta-D-ribosylamino)methylideneamino]imidazole-4-carboxamide = 5-[(5-phospho-1-deoxy-D-ribulos-1-ylimino)methylamino]-1-(5-phospho-beta-D-ribosyl)imidazole-4-carboxamide. It participates in amino-acid biosynthesis; L-histidine biosynthesis; L-histidine from 5-phospho-alpha-D-ribose 1-diphosphate: step 4/9. This is 1-(5-phosphoribosyl)-5-[(5-phosphoribosylamino)methylideneamino] imidazole-4-carboxamide isomerase from Brachyspira hyodysenteriae (strain ATCC 49526 / WA1).